The following is a 185-amino-acid chain: Pyridoxal 5'-phosphate synthase subunit PdxT (185 aa).

46–48 (GES) contacts L-glutamine. Cys75 acts as the Nucleophile in catalysis. Residues Arg101 and 129–130 (IR) each bind L-glutamine. Catalysis depends on charge relay system residues His165 and Glu167.

Belongs to the glutaminase PdxT/SNO family. As to quaternary structure, in the presence of PdxS, forms a dodecamer of heterodimers. Only shows activity in the heterodimer.

The enzyme catalyses aldehydo-D-ribose 5-phosphate + D-glyceraldehyde 3-phosphate + L-glutamine = pyridoxal 5'-phosphate + L-glutamate + phosphate + 3 H2O + H(+). It catalyses the reaction L-glutamine + H2O = L-glutamate + NH4(+). It functions in the pathway cofactor biosynthesis; pyridoxal 5'-phosphate biosynthesis. Functionally, catalyzes the hydrolysis of glutamine to glutamate and ammonia as part of the biosynthesis of pyridoxal 5'-phosphate. The resulting ammonia molecule is channeled to the active site of PdxS. In Staphylococcus epidermidis (strain ATCC 12228 / FDA PCI 1200), this protein is Pyridoxal 5'-phosphate synthase subunit PdxT.